We begin with the raw amino-acid sequence, 1885 residues long: Chitin synthase 5 (1885 aa).

The region spanning 1–789 (MATRGNVPAH…SIALTGSQAA (789 aa)) is the Myosin motor domain. An ATP-binding site is contributed by 99–106 (GESGSGKT). N-linked (GlcNAc...) asparagine glycosylation is found at Asn-219 and Asn-429. Positions 601–649 (KPLRMPSVSRKKHDQLRRMASRRADRSPAPQEEEPLPGTEEAKVRRTKP) are disordered. Residues 609-621 (SRKKHDQLRRMAS) are compositionally biased toward basic residues. The tract at residues 666 to 690 (LDNITKSLTAPNVNNYFVFCLKPND) is actin-binding. The N-linked (GlcNAc...) asparagine glycan is linked to Asn-668. A disordered region spans residues 794–817 (GDIGSPSRPDTPGHNPFSDSKARL). The next 2 membrane-spanning stretches (helical) occupy residues 894–914 (WLAI…KWIG) and 929–949 (FAIN…IIVF). The 60-residue stretch at 957–1016 (QNVYSAAELSAHDGKGKHSAYVAIRGQVFDLGAFMPNHYPKIIPQSSLKKYAGVDATGLF) folds into the Cytochrome b5 heme-binding domain. N-linked (GlcNAc...) asparagine glycans are attached at residues Asn-1043 and Asn-1068. The chain crosses the membrane as a helical span at residues 1205–1225 (ILLAVSILLCSVIGFKFFAAL). 2 N-linked (GlcNAc...) asparagine glycosylation sites follow: Asn-1462 and Asn-1568. Transmembrane regions (helical) follow at residues 1599–1619 (LLST…IVLL), 1626–1646 (VPLT…IIFI), and 1653–1673 (MIGW…GLPL). N-linked (GlcNAc...) asparagine glycosylation is found at Asn-1759 and Asn-1790. Positions 1827–1882 (LPTDDMLLNEIRDILRTADLMTVTKKGIKQELERRFNVNLDMKRAYIGSATEAILS) constitute a DEK-C domain.

In the N-terminal section; belongs to the TRAFAC class myosin-kinesin ATPase superfamily. Myosin family. The protein in the C-terminal section; belongs to the chitin synthase family. Class V subfamily. Maximal activity requires trypsin activation, suggesting a zymogenic nature.

It is found in the cell membrane. The protein resides in the membrane. The catalysed reaction is [(1-&gt;4)-N-acetyl-beta-D-glucosaminyl](n) + UDP-N-acetyl-alpha-D-glucosamine = [(1-&gt;4)-N-acetyl-beta-D-glucosaminyl](n+1) + UDP + H(+). Its function is as follows. Polymerizes chitin, a structural polymer of the cell wall and septum, by transferring the sugar moiety of UDP-GlcNAc to the non-reducing end of the growing chitin polymer. CHS5 is required for the sustained growth at 37 degrees Celsius and is of critical importance for virulence. Especially important at infection temperatures for maintaining the cell wall integrity of developing yeast buds, elongating tips of hyphae, and random sites of expansion in sclerotic forms. In Exophiala dermatitidis (Black yeast-like fungus), this protein is Chitin synthase 5.